The following is a 198-amino-acid chain: Recombination protein RecR (198 aa).

The segment at 57-72 (CSICGRLTDDDPCSIC) adopts a C4-type zinc-finger fold. The region spanning 80-175 (TTILVLEDSR…KVTRLARGLA (96 aa)) is the Toprim domain.

It belongs to the RecR family.

In terms of biological role, may play a role in DNA repair. It seems to be involved in an RecBC-independent recombinational process of DNA repair. It may act with RecF and RecO. This Streptococcus pneumoniae serotype 2 (strain D39 / NCTC 7466) protein is Recombination protein RecR.